We begin with the raw amino-acid sequence, 222 residues long: Cyclin-U2-1 (222 aa).

This sequence belongs to the cyclin family. Cyclin U/P subfamily. As to quaternary structure, interacts with CDKA-1. In terms of tissue distribution, expressed in roots, stems and flowers. Expressed in the shoot apex, leaf primordia and young leaves.

The sequence is that of Cyclin-U2-1 (CYCU2-1) from Arabidopsis thaliana (Mouse-ear cress).